A 688-amino-acid chain; its full sequence is Complement C1s-1 subcomponent (688 aa).

The signal sequence occupies residues 1-15 (MWYLVLFSLLASFSA). The 115-residue stretch at 16–130 (EPTMHGEILS…TGFAAYYTAI (115 aa)) folds into the CUB 1 domain. Ca(2+) is bound by residues Glu60, Asp68, Asp113, Asp131, Val132, and Glu134. Cysteines 65 and 83 form a disulfide. In terms of domain architecture, EGF-like; calcium-binding spans 131–172 (DVNECTDFTDVPCSHFCNNFIGGYFCSCPPEYFLHDDMRNCG). Disulfide bonds link Cys135-Cys147, Cys143-Cys156, and Cys158-Cys171. Ca(2+)-binding residues include Asn149, Phe150, and Gly153. (3R)-3-hydroxyasparagine is present on Asn149. Residue Asn174 is glycosylated (N-linked (GlcNAc...) asparagine). A disulfide bond links Cys175 and Cys202. Residues 175 to 290 (CSGDVFTALI…KGWKLRYHGD (116 aa)) enclose the CUB 2 domain. Glu226, Asp236, Asp275, Gly278, and Gln279 together coordinate Ca(2+). An intrachain disulfide couples Cys234 to Cys251. 2 Sushi domains span residues 292–356 (ISCP…KCQP) and 357–423 (VYCG…RCIP). 7 cysteine pairs are disulfide-bonded: Cys294/Cys341, Cys321/Cys354, Cys359/Cys403, Cys386/Cys421, Cys425/Cys549, Cys595/Cys618, and Cys627/Cys659. The Peptidase S1 domain maps to 438–680 (IFGGQPAKIE…YVDWILKTMQ (243 aa)). Catalysis depends on charge relay system residues His475 and Asp529. The Charge relay system role is filled by Ser631.

Belongs to the peptidase S1 family. As to quaternary structure, core component of the complement C1 complex, a calcium-dependent complex composed of 1 molecule of the C1Q subcomplex, 2 molecules of C1R and 2 molecules of C1S. The C1Q subcomplex is composed 18 subunits: 3 chains of C1QA, C1QB, and C1QC trimerize to form 6 collagen-like triple helices connected to six globular ligand-recognition modules. Post-translationally, cleaved and activated by C1R to generate Complement C1s subcomponent heavy and light chains. In terms of processing, the iron and 2-oxoglutarate dependent 3-hydroxylation of aspartate and asparagine is (R) stereospecific within EGF domains. As to expression, specifically expressed in male reproductive tissues.

It localises to the secreted. The protein localises to the cell surface. It catalyses the reaction Cleavage of Arg-|-Ala bond in complement component C4 to form C4a and C4b, and Lys(or Arg)-|-Lys bond in complement component C2 to form C2a and C2b: the 'classical' pathway C3 convertase.. Its activity is regulated as follows. Cleaved and activated by C1R. Immunoglobulin-binding promotes autoactivation of C1R, which results in the cleavage of the Arg-Ile bond in the catalytic domain. Inhibited by C1 inhibitor (SERPING1). In terms of biological role, component of the complement C1 complex, a multiprotein complex that initiates the classical pathway of the complement system, a cascade of proteins that leads to phagocytosis and breakdown of pathogens and signaling that strengthens the adaptive immune system. C1S is activated following association of the C1 complex with immunoglobulins (IgG or IgM) complexed with antigens to form antigen-antibody complexes on the surface of pathogens. C1S is cleaved and activated by C1R to generate C1s subcomponent heavy and light chains. C1s subcomponent light chain then cleaves and activates C2 and C4, the next components of the classical complement pathway. Its function is as follows. Serine protease component of the complement C1 complex, which catalyzes cleavage and activation of C2 and C4, the next components of the classical complement pathway. Also cleaves IGFBP5 and thereby inhibits the trophic effects of IGF1. The sequence is that of Complement C1s-1 subcomponent from Mus musculus (Mouse).